A 148-amino-acid chain; its full sequence is Macrodomain Ter protein (148 aa).

Belongs to the MatP family. As to quaternary structure, homodimer.

Its subcellular location is the cytoplasm. In terms of biological role, required for spatial organization of the terminus region of the chromosome (Ter macrodomain) during the cell cycle. Prevents early segregation of duplicated Ter macrodomains during cell division. Binds specifically to matS, which is a 13 bp signature motif repeated within the Ter macrodomain. In Haemophilus influenzae (strain PittGG), this protein is Macrodomain Ter protein.